The following is a 337-amino-acid chain: MYETLFWQFAKIWAVLIPLFLAVAYFTYVERRVIGHMQDRRGPNRVGPRGLLQPIADALKLLFKEITIPTYASRTLFLIAPAMAIMPALAAWAVIPFDDGLVVADINAGLLYILAMTSLGVYGLIIAGWASNSKYALLGTLRASAQVVSYEIAMGFALVGVLIAAGTMNLSGIVHAQAGPFWEWFWLPLLPLFLIYWISGVAETNRAPFDIAEGESEIVAGFHVEYSGMAFAVFFLAEYANMLLISFLAATLFLGGWHSPFEGLPVLGPAFDWVPGIVWLFAKAAFFAFCYLWFRATFPRYRYDQLMRLGWKVLIPGTVVWLVVLTGLVYGGVGPWF.

The next 8 membrane-spanning stretches (helical) occupy residues 9–29 (FAKIWAVLIPLFLAVAYFTYV), 77–97 (FLIAPAMAIMPALAAWAVIPF), 110–130 (LLYILAMTSLGVYGLIIAGWA), 154–174 (MGFALVGVLIAAGTMNLSGIV), 181–201 (FWEWFWLPLLPLFLIYWISGV), 229–249 (MAFAVFFLAEYANMLLISFLA), 274–294 (VPGIVWLFAKAAFFAFCYLWF), and 313–333 (VLIPGTVVWLVVLTGLVYGGV).

It belongs to the complex I subunit 1 family. As to quaternary structure, NDH-1 is composed of 14 different subunits. Subunits NuoA, H, J, K, L, M, N constitute the membrane sector of the complex.

It localises to the cell inner membrane. It carries out the reaction a quinone + NADH + 5 H(+)(in) = a quinol + NAD(+) + 4 H(+)(out). NDH-1 shuttles electrons from NADH, via FMN and iron-sulfur (Fe-S) centers, to quinones in the respiratory chain. The immediate electron acceptor for the enzyme in this species is believed to be ubiquinone. Couples the redox reaction to proton translocation (for every two electrons transferred, four hydrogen ions are translocated across the cytoplasmic membrane), and thus conserves the redox energy in a proton gradient. This subunit may bind ubiquinone. This Halorhodospira halophila (strain DSM 244 / SL1) (Ectothiorhodospira halophila (strain DSM 244 / SL1)) protein is NADH-quinone oxidoreductase subunit H.